The chain runs to 232 residues: Large ribosomal subunit protein uL1 (232 aa).

This sequence belongs to the universal ribosomal protein uL1 family. As to quaternary structure, part of the 50S ribosomal subunit.

Its function is as follows. Binds directly to 23S rRNA. The L1 stalk is quite mobile in the ribosome, and is involved in E site tRNA release. In terms of biological role, protein L1 is also a translational repressor protein, it controls the translation of the L11 operon by binding to its mRNA. This is Large ribosomal subunit protein uL1 from Bacteroides thetaiotaomicron (strain ATCC 29148 / DSM 2079 / JCM 5827 / CCUG 10774 / NCTC 10582 / VPI-5482 / E50).